A 480-amino-acid chain; its full sequence is MHTKTIVELAQGFKDKDFSCVELTQYYLNRIDQSDLNAFITVTDELALAQAQVADDKIASGNANILTGIPYAHKDIFCTKGVKTSAGSRMLDTFVSPYDATVSQKLNQVNLVMLGKTNMDEFAMGSSNENSFYGAVKNPWNYLKIPGGSSGGSAASVAGGLSCFATGTDTGGSIRQPASLCGITGIKPTYGRISRYGMIAYASSLDQAGPMTKTAQDAAIVLNVMAGFDEKDSTSVEQKVPDYTTHLNDSIKGLIIGLPKEFFSSGLDDEVANNIMAAVKEFEAMGAIVKEVSLPNLAYAIPVYYIVAPCECSSNLSRLDGVRYGYRAKNVKNLEDLYLRSRSEGFGEEVKRRIMIGAYALSAGYYDAYYLKAQKVRHLISDDFKKVFEQIDVIMGPVSPTTAFDLGSVKDPVSMYLADIYTLSANLAGLPGMSIPAGFAQNLPVGLQLIGNFWSESRLLNIAHQFQLQTDWHLKTPQEC.

Catalysis depends on charge relay system residues Lys74 and Ser149. Ser173 serves as the catalytic Acyl-ester intermediate.

This sequence belongs to the amidase family. GatA subfamily. As to quaternary structure, heterotrimer of A, B and C subunits.

The catalysed reaction is L-glutamyl-tRNA(Gln) + L-glutamine + ATP + H2O = L-glutaminyl-tRNA(Gln) + L-glutamate + ADP + phosphate + H(+). Functionally, allows the formation of correctly charged Gln-tRNA(Gln) through the transamidation of misacylated Glu-tRNA(Gln) in organisms which lack glutaminyl-tRNA synthetase. The reaction takes place in the presence of glutamine and ATP through an activated gamma-phospho-Glu-tRNA(Gln). The chain is Glutamyl-tRNA(Gln) amidotransferase subunit A from Ruthia magnifica subsp. Calyptogena magnifica.